A 232-amino-acid polypeptide reads, in one-letter code: Vesicle transport through interaction with t-SNAREs homolog 1B (232 aa).

Position 2 is an N-acetylalanine (Ala2). Interaction with CLINT1 regions lie at residues 2 to 23 (ATSA…GLHE) and 69 to 73 (APLSF). At 2–208 (ATSAASSEHF…SRKVTTNKLL (207 aa)) the chain is on the cytoplasmic side. Residues 35-98 (MAGTEEKKKL…AKLHREVRST (64 aa)) are a coiled coil. Thr103 carries the post-translational modification Phosphothreonine. Position 107 is an omega-N-methylarginine (Arg107). Ser138 carries the phosphoserine modification. Residues 161–198 (SEIIEELGEQRDQLERTKSRLVNTSENLSKSRKILRSM) adopt a coiled-coil conformation. Residues 209–229 (LSIVILLELAILGGLVYYKFL) form a helical; Anchor for type IV membrane protein membrane-spanning segment. Over 230-232 (RRH) the chain is Vesicular.

The protein belongs to the VTI1 family. In terms of assembly, forms a SNARE complex with STX7, STX8 and VAMP8 which functions in the homotypic fusion of late endosomes. Component of the SNARE complex composed of STX7, STX8, VAMP7 and VIT1B that is required for heterotypic fusion of late endosomes with lysosomes. May interact with STX17. Interacts with CLINT1.

Its subcellular location is the early endosome membrane. The protein resides in the late endosome membrane. The protein localises to the lysosome membrane. It localises to the cytoplasmic granule. It is found in the recycling endosome membrane. V-SNARE that mediates vesicle transport pathways through interactions with t-SNAREs on the target membrane. These interactions are proposed to mediate aspects of the specificity of vesicle trafficking and to promote fusion of the lipid bilayers. May be concerned with increased secretion of cytokines associated with cellular senescence. This chain is Vesicle transport through interaction with t-SNAREs homolog 1B (VTI1B), found in Bos taurus (Bovine).